We begin with the raw amino-acid sequence, 413 residues long: Phosphopentomutase (413 aa).

Residues aspartate 11, aspartate 306, histidine 311, aspartate 347, histidine 348, and histidine 359 each contribute to the Mn(2+) site.

Belongs to the phosphopentomutase family. The cofactor is Mn(2+).

It is found in the cytoplasm. It carries out the reaction 2-deoxy-alpha-D-ribose 1-phosphate = 2-deoxy-D-ribose 5-phosphate. It catalyses the reaction alpha-D-ribose 1-phosphate = D-ribose 5-phosphate. Its pathway is carbohydrate degradation; 2-deoxy-D-ribose 1-phosphate degradation; D-glyceraldehyde 3-phosphate and acetaldehyde from 2-deoxy-alpha-D-ribose 1-phosphate: step 1/2. Its function is as follows. Isomerase that catalyzes the conversion of deoxy-ribose 1-phosphate (dRib-1-P) and ribose 1-phosphate (Rib-1-P) to deoxy-ribose 5-phosphate (dRib-5-P) and ribose 5-phosphate (Rib-5-P), respectively. In Helicobacter pylori (strain ATCC 700392 / 26695) (Campylobacter pylori), this protein is Phosphopentomutase.